Reading from the N-terminus, the 478-residue chain is Alpha-(1,3)-fucosyltransferase FucT (478 aa).

Residues Gly-94, 186–189 (VASN), Arg-195, 222–225 (VKNK), Asn-240, and 246–250 (YVTEK) each bind substrate. Positions 347-353 (DNPFIFC) are important for acceptor specificity. 10 consecutive repeat copies span residues 364 to 370 (DDLRVNY), 371 to 377 (DDLRVNY), 378 to 384 (DDLRINY), 385 to 391 (DDLRVNY), 392 to 398 (DDLRINY), 399 to 405 (DDLRVNY), 406 to 412 (DDLRVNY), 413 to 419 (DDLRINY), 420 to 426 (DDLRVNY), and 427 to 433 (DDLRVNY). Residues 364–433 (DDLRVNYDDL…VNYDDLRVNY (70 aa)) form a 10 X 7 AA tandem repeat of D-D-L-R-[IV]-N-Y region. The segment at 434-478 (ERLLSKATPLLELSQNTTSKIYRKAYQKSLPLLRAIRRWVKKLGL) is may be involved in membrane binding.

This sequence belongs to the glycosyltransferase 10 family. Homodimer.

The protein resides in the membrane. Its subcellular location is the cytoplasm. It catalyses the reaction a beta-D-galactosyl-(1-&gt;4)-N-acetyl-beta-D-glucosaminyl derivative + GDP-beta-L-fucose = a beta-D-galactosyl-(1-&gt;4)-[alpha-L-fucosyl-(1-&gt;3)]-N-acetyl-beta-D-glucosaminyl derivative + GDP + H(+). It functions in the pathway lipopolysaccharide biosynthesis; LPS oligosaccharide biosynthesis. Functionally, involved in the biosynthesis of the Lewis X (LeX) trisaccharide of the lipopolysaccharide (LPS) O-antigen. Catalyzes the addition of fucose in alpha 1-3 linkage to Gal-beta-1-4-GlcNAc-beta-O-R (LacNAc-R) type II acceptor. The protein is Alpha-(1,3)-fucosyltransferase FucT of Helicobacter pylori (Campylobacter pylori).